The chain runs to 1071 residues: Serine/threonine-protein phosphatase 6 regulatory ankyrin repeat subunit C (1071 aa).

ANK repeat units lie at residues 7 to 36 (SDQP…EVNA), 40 to 69 (ERRT…NVNA), 73 to 102 (VWLT…DVTA), 106 to 135 (YWQT…SLNM), 139 to 168 (TGRA…NLSA), 172 to 201 (KDRQ…DKSC), 205 to 234 (RGYT…EIDE), 238 to 267 (FGNT…NVNQ), 271 to 301 (RGYT…DVNM), 305 to 334 (EGKS…EIDC), 338 to 367 (YGNT…DTAR), 371 to 400 (HGMF…LYSI), 422 to 451 (FGRT…DMNK), 455 to 484 (FGRT…EVNE), 488 to 539 (SGCT…DPCL), 543 to 573 (KGYS…TLGD), 578 to 607 (GSIS…CVDV), 611 to 640 (VGRS…SCLL), 645 to 674 (SKWG…GADL), 681 to 710 (EGQT…CPDM), 714 to 743 (RGRT…SVLS), 747 to 776 (QGRS…HSQP), 784 to 814 (HGYT…SIQE), 816 to 845 (NPFT…CNSL), 852 to 881 (KGRT…DIDA), 885 to 915 (SGRS…DLSL), 919 to 951 (NKNT…LINA), and 955 to 984 (MLQM…TVLA).

As to quaternary structure, protein phosphatase 6 (PP6) holoenzyme is proposed to be a heterotrimeric complex formed by the catalytic subunit, a SAPS domain-containing subunit (PP6R) and an ankyrin repeat-domain containing regulatory subunit (ARS).

Putative regulatory subunit of protein phosphatase 6 (PP6) that may be involved in the recognition of phosphoprotein substrates. This chain is Serine/threonine-protein phosphatase 6 regulatory ankyrin repeat subunit C (ankrd52), found in Danio rerio (Zebrafish).